Consider the following 159-residue polypeptide: 3-hydroxyacyl-[acyl-carrier-protein] dehydratase FabZ (159 aa).

H58 is an active-site residue.

The protein belongs to the thioester dehydratase family. FabZ subfamily.

The protein localises to the cytoplasm. It catalyses the reaction a (3R)-hydroxyacyl-[ACP] = a (2E)-enoyl-[ACP] + H2O. Involved in unsaturated fatty acids biosynthesis. Catalyzes the dehydration of short chain beta-hydroxyacyl-ACPs and long chain saturated and unsaturated beta-hydroxyacyl-ACPs. This is 3-hydroxyacyl-[acyl-carrier-protein] dehydratase FabZ from Helicobacter pylori (strain G27).